A 159-amino-acid polypeptide reads, in one-letter code: MNTNQNTNLKEITMYTDGACSGNPGPGGYGVVMLYKGHRKELSAGFRDTTNNRMELLATIVGLETLKEKCNVNLYTDSQYVVNAIEKGWAKKWRANGWMRNKKEPALNPDLWERLLKLCEFHNVKFNWVKGHAGHPENERCDQLAVAAAKQPNLPLDVR.

Residues 8 to 150 (NLKEITMYTD…CDQLAVAAAK (143 aa)) form the RNase H type-1 domain. 4 residues coordinate Mg(2+): D17, E55, D77, and D142.

This sequence belongs to the RNase H family. In terms of assembly, monomer. It depends on Mg(2+) as a cofactor.

The protein resides in the cytoplasm. The catalysed reaction is Endonucleolytic cleavage to 5'-phosphomonoester.. In terms of biological role, endonuclease that specifically degrades the RNA of RNA-DNA hybrids. This Desulforamulus reducens (strain ATCC BAA-1160 / DSM 100696 / MI-1) (Desulfotomaculum reducens) protein is Ribonuclease H.